We begin with the raw amino-acid sequence, 416 residues long: Imidazolonepropionase (416 aa).

Fe(3+) is bound by residues His-82 and His-84. Zn(2+) is bound by residues His-82 and His-84. Residues Arg-91, Tyr-154, and His-187 each contribute to the 4-imidazolone-5-propanoate site. Tyr-154 lines the N-formimidoyl-L-glutamate pocket. His-252 is a Fe(3+) binding site. Residue His-252 participates in Zn(2+) binding. Glu-255 is a 4-imidazolone-5-propanoate binding site. Position 326 (Asp-326) interacts with Fe(3+). Asp-326 is a Zn(2+) binding site. N-formimidoyl-L-glutamate-binding residues include Asn-328 and Gly-330. Ser-331 is a 4-imidazolone-5-propanoate binding site.

The protein belongs to the metallo-dependent hydrolases superfamily. HutI family. It depends on Zn(2+) as a cofactor. Fe(3+) is required as a cofactor.

The protein resides in the cytoplasm. The enzyme catalyses 4-imidazolone-5-propanoate + H2O = N-formimidoyl-L-glutamate. It participates in amino-acid degradation; L-histidine degradation into L-glutamate; N-formimidoyl-L-glutamate from L-histidine: step 3/3. Its function is as follows. Catalyzes the hydrolytic cleavage of the carbon-nitrogen bond in imidazolone-5-propanoate to yield N-formimidoyl-L-glutamate. It is the third step in the universal histidine degradation pathway. The chain is Imidazolonepropionase from Parabacteroides distasonis (strain ATCC 8503 / DSM 20701 / CIP 104284 / JCM 5825 / NCTC 11152).